A 95-amino-acid chain; its full sequence is Aspartyl/glutamyl-tRNA(Asn/Gln) amidotransferase subunit C (95 aa).

This sequence belongs to the GatC family. In terms of assembly, heterotrimer of A, B and C subunits.

The enzyme catalyses L-glutamyl-tRNA(Gln) + L-glutamine + ATP + H2O = L-glutaminyl-tRNA(Gln) + L-glutamate + ADP + phosphate + H(+). It catalyses the reaction L-aspartyl-tRNA(Asn) + L-glutamine + ATP + H2O = L-asparaginyl-tRNA(Asn) + L-glutamate + ADP + phosphate + 2 H(+). In terms of biological role, allows the formation of correctly charged Asn-tRNA(Asn) or Gln-tRNA(Gln) through the transamidation of misacylated Asp-tRNA(Asn) or Glu-tRNA(Gln) in organisms which lack either or both of asparaginyl-tRNA or glutaminyl-tRNA synthetases. The reaction takes place in the presence of glutamine and ATP through an activated phospho-Asp-tRNA(Asn) or phospho-Glu-tRNA(Gln). This chain is Aspartyl/glutamyl-tRNA(Asn/Gln) amidotransferase subunit C, found in Alcanivorax borkumensis (strain ATCC 700651 / DSM 11573 / NCIMB 13689 / SK2).